The sequence spans 436 residues: 3-ketoacyl-CoA thiolase (436 aa).

The active-site Acyl-thioester intermediate is the C99. Active-site proton acceptor residues include H392 and C422.

It belongs to the thiolase-like superfamily. Thiolase family. Heterotetramer of two alpha chains (FadJ) and two beta chains (FadI).

The protein resides in the cytoplasm. The enzyme catalyses an acyl-CoA + acetyl-CoA = a 3-oxoacyl-CoA + CoA. The protein operates within lipid metabolism; fatty acid beta-oxidation. Catalyzes the final step of fatty acid oxidation in which acetyl-CoA is released and the CoA ester of a fatty acid two carbons shorter is formed. This is 3-ketoacyl-CoA thiolase from Escherichia coli O9:H4 (strain HS).